Reading from the N-terminus, the 24-residue chain is Brevinin-1JDb (24 aa).

Cysteines 18 and 24 form a disulfide.

In terms of tissue distribution, expressed by the skin glands.

The protein localises to the secreted. Functionally, has antibacterial activity against E.coli and S.aureus strains. Has antifungal activity against C.albicans. Has hemolytic activity against rabbit erythrocytes. This Odorrana jingdongensis (Jingdong frog) protein is Brevinin-1JDb.